Consider the following 298-residue polypeptide: 4-hydroxy-tetrahydrodipicolinate synthase (298 aa).

Position 51 (threonine 51) interacts with pyruvate. Tyrosine 139 (proton donor/acceptor) is an active-site residue. Lysine 167 serves as the catalytic Schiff-base intermediate with substrate. A pyruvate-binding site is contributed by isoleucine 209.

This sequence belongs to the DapA family. In terms of assembly, homotetramer; dimer of dimers.

It is found in the cytoplasm. It catalyses the reaction L-aspartate 4-semialdehyde + pyruvate = (2S,4S)-4-hydroxy-2,3,4,5-tetrahydrodipicolinate + H2O + H(+). It participates in amino-acid biosynthesis; L-lysine biosynthesis via DAP pathway; (S)-tetrahydrodipicolinate from L-aspartate: step 3/4. In terms of biological role, catalyzes the condensation of (S)-aspartate-beta-semialdehyde [(S)-ASA] and pyruvate to 4-hydroxy-tetrahydrodipicolinate (HTPA). In Haemophilus influenzae (strain PittEE), this protein is 4-hydroxy-tetrahydrodipicolinate synthase.